A 225-amino-acid chain; its full sequence is Transmembrane protein C16orf54 homolog (225 aa).

The chain crosses the membrane as a helical span at residues 34–54 (IPIMLGLASLTAFFIITTAVL). Positions 107 to 149 (RAPDPPTPGGTLEGRATAPPAIPTPHPSPSSLVPQTPPEVPAQ) are disordered. 2 positions are modified to phosphothreonine: Thr113 and Thr117. Phosphoserine is present on Ser195.

It localises to the membrane. This chain is Transmembrane protein C16orf54 homolog, found in Rattus norvegicus (Rat).